The primary structure comprises 348 residues: N6-Methyl-AMP deaminase (348 aa).

Zn(2+)-binding residues include His-18 and His-20. Residues His-20, Asn-22, His-68, Ser-100–Arg-103, Asp-142, and Gly-175 each bind N(6)-methyl-AMP. His-202 serves as a coordination point for Zn(2+). Residues Glu-205, Asp-287, and Asp-288 each contribute to the N(6)-methyl-AMP site. Glu-205 (proton donor) is an active-site residue. Asp-287 serves as a coordination point for Zn(2+).

The protein belongs to the metallo-dependent hydrolases superfamily. Adenosine and AMP deaminases family. Monomer. The cofactor is Zn(2+).

It carries out the reaction N(6)-methyl-AMP + H2O + H(+) = IMP + methylamine. Functionally, catalyzes the hydrolysis of the free cytosolic methylated adenosine nucleotide N(6)-methyl-AMP (N6-mAMP) to produce inositol monophosphate (IMP) and methylamine. Is required for the catabolism of cytosolic N6-mAMP, which is derived from the degradation of mRNA containing N6-methylated adenine (m6A). The chain is N6-Methyl-AMP deaminase (mapda) from Danio rerio (Zebrafish).